A 310-amino-acid polypeptide reads, in one-letter code: MTQPIVVAALYKFVTLEDYAELREPLLKAMLDNGVKGTLLLANEGINGTVSATREGIDGLLTWLRSDPRLVDVDHKESYCDEQPFYRTKVKLKKEIVTLGVPGVDPNNAVGTYVEPKDWNALISDPEVLLIDTRNDYEVAIGTFKGAIDPKTETFREFPEYIKANFDPSKHKKVAMFCTGGIRCEKASSYMLGEGFEAVYHLKGGILKYFEEVPQEESLWDGDCFVFDNRVTVRHDLTEGEYDQCHACRHPVNAQDRASEHYSPGVSCPHCWDSLSEKTRRSAIDRQKQIELAKARNLPHPIGYNYKAEA.

The Rhodanese domain occupies 124–218 (SDPEVLLIDT…YFEEVPQEES (95 aa)). The Cysteine persulfide intermediate role is filled by C178.

This sequence belongs to the TrhO family.

The enzyme catalyses uridine(34) in tRNA + AH2 + O2 = 5-hydroxyuridine(34) in tRNA + A + H2O. Functionally, catalyzes oxygen-dependent 5-hydroxyuridine (ho5U) modification at position 34 in tRNAs. This chain is tRNA uridine(34) hydroxylase, found in Pseudomonas putida (strain W619).